Here is a 349-residue protein sequence, read N- to C-terminus: sn-glycerol-3-phosphate import ATP-binding protein UgpC (349 aa).

One can recognise an ABC transporter domain in the interval 4–234; sequence ISLRDVRKSY…PATTFVAGFI (231 aa). Position 36-43 (36-43) interacts with ATP; that stretch reads GPSGCGKS.

The protein belongs to the ABC transporter superfamily. sn-glycerol-3-phosphate importer (TC 3.A.1.1.3) family. As to quaternary structure, the complex is composed of two ATP-binding proteins (UgpC), two transmembrane proteins (UgpA and UgpE) and a solute-binding protein (UgpB).

The protein localises to the cell inner membrane. The catalysed reaction is sn-glycerol 3-phosphate(out) + ATP + H2O = sn-glycerol 3-phosphate(in) + ADP + phosphate + H(+). Part of the ABC transporter complex UgpBAEC involved in sn-glycerol-3-phosphate (G3P) import. Responsible for energy coupling to the transport system. The polypeptide is sn-glycerol-3-phosphate import ATP-binding protein UgpC (Cereibacter sphaeroides (strain ATCC 17023 / DSM 158 / JCM 6121 / CCUG 31486 / LMG 2827 / NBRC 12203 / NCIMB 8253 / ATH 2.4.1.) (Rhodobacter sphaeroides)).